A 167-amino-acid polypeptide reads, in one-letter code: MKKVFITTGTEHYLRQLMANYTGGNVTLLQNFSQSLLYQESTGEKLFQEGAEYRVLQSSGSIKGFGVVVFEYIHLRDEEIPIFLQMYQRASLHFSETPGLQSTKLTKAMNMNKFLIISFWDSEVFFHDWKKSPLSKEITNIMRKNNTQSGFSHEDIYHYPEFSHDAK.

The important for catalysis stretch occupies residues 1–50; the sequence is MKKVFITTGTEHYLRQLMANYTGGNVTLLQNFSQSLLYQESTGEKLFQEG. Residues 67–154 enclose the ABM domain; the sequence is VVVFEYIHLR…NNTQSGFSHE (88 aa).

This sequence belongs to the antibiotic biosynthesis monooxygenase family. As to quaternary structure, monomer.

Its subcellular location is the cytoplasm. Catalyzes the degradation of heme to biliverdin in the presence of a suitable electron donor such as ascorbate, with the subsequent release of iron. Hardly any CO is released by the heme degradation reaction. Binds heme. Allows bacterial pathogens to use the host heme as an iron source. Release of iron from heme may play a crucial role in the pathogenicity of L.monocytogenes. This chain is Heme-degrading monooxygenase, found in Listeria monocytogenes serovar 1/2a (strain ATCC BAA-679 / EGD-e).